We begin with the raw amino-acid sequence, 408 residues long: DNA-directed RNA polymerase subunit Rpo1C (408 aa).

This sequence belongs to the RNA polymerase beta' chain family. Part of the RNA polymerase complex.

Its subcellular location is the cytoplasm. The enzyme catalyses RNA(n) + a ribonucleoside 5'-triphosphate = RNA(n+1) + diphosphate. In terms of biological role, DNA-dependent RNA polymerase (RNAP) catalyzes the transcription of DNA into RNA using the four ribonucleoside triphosphates as substrates. Forms part of the jaw domain. In Methanosarcina mazei (strain ATCC BAA-159 / DSM 3647 / Goe1 / Go1 / JCM 11833 / OCM 88) (Methanosarcina frisia), this protein is DNA-directed RNA polymerase subunit Rpo1C.